A 345-amino-acid chain; its full sequence is Transcription factor 19 (345 aa).

One can recognise an FHA domain in the interval 31–88; the sequence is YRLGHRADLCDVALRPQQEPGLISGIHAELHAEPRGDDWRVSLEDHSLQGTLVNNVRL. Disordered stretches follow at residues 138-167 and 190-277; these read RSRG…STLS and LTFS…KYPV. The PHD-type zinc-finger motif lies at 293-342; that stretch reads AAPCCCLPQEETVAWVQCDGCDVWFHVACVGCSIQAAREADFRCPGCRAG. Residues C296, C298, C310, C313, H318, C321, C336, and C339 each coordinate Zn(2+).

The protein resides in the nucleus. Potential transcription factor that may play a role in the regulation of genes involved in cell cycle G1/S transition. May bind to regulatory elements of genes, including the promoter of the transcription factor FOXO1. In Macaca mulatta (Rhesus macaque), this protein is Transcription factor 19 (TCF19).